Here is a 346-residue protein sequence, read N- to C-terminus: Phosphoribosylformylglycinamidine cyclo-ligase (346 aa).

It belongs to the AIR synthase family.

The protein resides in the cytoplasm. It carries out the reaction 2-formamido-N(1)-(5-O-phospho-beta-D-ribosyl)acetamidine + ATP = 5-amino-1-(5-phospho-beta-D-ribosyl)imidazole + ADP + phosphate + H(+). Its pathway is purine metabolism; IMP biosynthesis via de novo pathway; 5-amino-1-(5-phospho-D-ribosyl)imidazole from N(2)-formyl-N(1)-(5-phospho-D-ribosyl)glycinamide: step 2/2. This chain is Phosphoribosylformylglycinamidine cyclo-ligase, found in Vibrio atlanticus (strain LGP32) (Vibrio splendidus (strain Mel32)).